The sequence spans 385 residues: MAGWHLDTKMAQDIVARTMRIIDTNINVMDARGRIIGSGDRERIGELHEGALLVLSQGRVVDIDDAVARHLHGVRQGINLPLRLEGEIVGVIGLTGEPENLRKYGELVCMTAEMMLEQSRLMHLLAQDSRLREELVMNLIQAEENTPALTEWAQRLGIDLNQPRVVAIVEVDSGQLGVDSAMAELQQLQNALTTPERNNLVAIVSLTEMVVLKPALNSFGRWDAEDHRKRVEQLITRMKEYGQLRFRVSLGNYFTGPGSIARSYRTAKTTMVVGKQRMPESRCYFYQDLMLPVLLDSLRGDWQANELARPLARLKTMDNNGLLRRTLAAWFRHNVQPLATSKALFIHRNTLEYRLNRISELTGLDLGNFDDRLLLYVALQLDEER.

The protein belongs to the CdaR family.

In terms of biological role, seems to regulate the expression of the operons for the enzymes involved in D-galactarate, D-glucarate and D-glycerate utilization. This is Carbohydrate diacid regulator (cdaR) from Escherichia coli (strain K12).